We begin with the raw amino-acid sequence, 59 residues long: Protein translocase subunit SecE (59 aa).

A helical transmembrane segment spans residues Gly-37–Leu-57.

It belongs to the SecE/SEC61-gamma family. As to quaternary structure, component of the Sec protein translocase complex. Heterotrimer consisting of SecY (alpha), SecG (beta) and SecE (gamma) subunits. The heterotrimers can form oligomers, although 1 heterotrimer is thought to be able to translocate proteins. Interacts with the ribosome. May interact with SecDF, and other proteins may be involved.

It localises to the cell membrane. Functionally, essential subunit of the Sec protein translocation channel SecYEG. Clamps together the 2 halves of SecY. May contact the channel plug during translocation. This Methanothermobacter thermautotrophicus (strain ATCC 29096 / DSM 1053 / JCM 10044 / NBRC 100330 / Delta H) (Methanobacterium thermoautotrophicum) protein is Protein translocase subunit SecE.